A 121-amino-acid chain; its full sequence is MIQQETFLNVADNSGAKRIQCIRVLGTNRRYAHVGDVIVATVKDAMPNMGVKKSDIVKAVVVRTKHTMRRETGNAIRFDDNAAVIINDDKNPRGTRVFGPVARELRERSFTKIVSLAPEVI.

The protein belongs to the universal ribosomal protein uL14 family. As to quaternary structure, part of the 50S ribosomal subunit. Forms a cluster with proteins L3 and L19. In the 70S ribosome, L14 and L19 interact and together make contacts with the 16S rRNA in bridges B5 and B8.

In terms of biological role, binds to 23S rRNA. Forms part of two intersubunit bridges in the 70S ribosome. This is Large ribosomal subunit protein uL14 from Synechococcus sp. (strain RCC307).